We begin with the raw amino-acid sequence, 141 residues long: Large ribosomal subunit protein uL11c (141 aa).

This sequence belongs to the universal ribosomal protein uL11 family. In terms of assembly, part of the ribosomal stalk of the 50S ribosomal subunit. Interacts with L10 and the large rRNA to form the base of the stalk. L10 forms an elongated spine to which L12 dimers bind in a sequential fashion forming a multimeric L10(L12)X complex.

The protein resides in the plastid. It localises to the cyanelle. Its function is as follows. Forms part of the ribosomal stalk which helps the ribosome interact with GTP-bound translation factors. The protein is Large ribosomal subunit protein uL11c of Cyanophora paradoxa.